Consider the following 120-residue polypeptide: MFLLYEYDIFWAFLIISSLIPILAFFISGVLAPISKGPEKLSSYESGIEPMGNAWLQFRIRYYMFALVFVVFDVETVFLYPWAMSFDVLGVSVFIEALIFVLILIVGLVYAWRKGALEWS.

3 helical membrane-spanning segments follow: residues 9–29 (IFWAFLIISSLIPILAFFISG), 64–84 (MFALVFVVFDVETVFLYPWAM), and 88–108 (VLGVSVFIEALIFVLILIVGL).

It belongs to the complex I subunit 3 family. NDH is composed of at least 16 different subunits, 5 of which are encoded in the nucleus.

It localises to the plastid. The protein localises to the chloroplast thylakoid membrane. It catalyses the reaction a plastoquinone + NADH + (n+1) H(+)(in) = a plastoquinol + NAD(+) + n H(+)(out). The catalysed reaction is a plastoquinone + NADPH + (n+1) H(+)(in) = a plastoquinol + NADP(+) + n H(+)(out). NDH shuttles electrons from NAD(P)H:plastoquinone, via FMN and iron-sulfur (Fe-S) centers, to quinones in the photosynthetic chain and possibly in a chloroplast respiratory chain. The immediate electron acceptor for the enzyme in this species is believed to be plastoquinone. Couples the redox reaction to proton translocation, and thus conserves the redox energy in a proton gradient. In Panax ginseng (Korean ginseng), this protein is NAD(P)H-quinone oxidoreductase subunit 3, chloroplastic.